Here is a 290-residue protein sequence, read N- to C-terminus: tRNA (guanine-N(7)-)-methyltransferase (290 aa).

Basic and acidic residues-rich tracts occupy residues Met-1–Arg-12 and Ala-20–Lys-43. Residues Met-1–Ser-49 form a disordered region. S-adenosyl-L-methionine is bound by residues Glu-104, Asp-129, Asp-156, and Asp-179. The active site involves Asp-179. Substrate is bound by residues Lys-183, Asp-215, and Thr-252–Glu-255.

This sequence belongs to the class I-like SAM-binding methyltransferase superfamily. TrmB family.

The enzyme catalyses guanosine(46) in tRNA + S-adenosyl-L-methionine = N(7)-methylguanosine(46) in tRNA + S-adenosyl-L-homocysteine. It functions in the pathway tRNA modification; N(7)-methylguanine-tRNA biosynthesis. Catalyzes the formation of N(7)-methylguanine at position 46 (m7G46) in tRNA. The protein is tRNA (guanine-N(7)-)-methyltransferase of Streptomyces avermitilis (strain ATCC 31267 / DSM 46492 / JCM 5070 / NBRC 14893 / NCIMB 12804 / NRRL 8165 / MA-4680).